Consider the following 370-residue polypeptide: 3-dehydroquinate synthase (370 aa).

Residues 112–116 (GVIGD), 136–137 (TT), Lys-149, Lys-158, and 176–179 (TLAT) each bind NAD(+). Residues Glu-191, His-254, and His-276 each contribute to the Zn(2+) site.

The protein belongs to the sugar phosphate cyclases superfamily. Dehydroquinate synthase family. The cofactor is Co(2+). Requires Zn(2+) as cofactor. NAD(+) is required as a cofactor.

Its subcellular location is the cytoplasm. It catalyses the reaction 7-phospho-2-dehydro-3-deoxy-D-arabino-heptonate = 3-dehydroquinate + phosphate. It functions in the pathway metabolic intermediate biosynthesis; chorismate biosynthesis; chorismate from D-erythrose 4-phosphate and phosphoenolpyruvate: step 2/7. Its function is as follows. Catalyzes the conversion of 3-deoxy-D-arabino-heptulosonate 7-phosphate (DAHP) to dehydroquinate (DHQ). This is 3-dehydroquinate synthase from Xylella fastidiosa (strain M23).